Here is a 128-residue protein sequence, read N- to C-terminus: Mu-like prophage FluMu protein gp35 (128 aa).

The disordered stretch occupies residues Thr53–Asn87.

The protein to phage Mu protein gp35. In terms of assembly, monomer.

The sequence is that of Mu-like prophage FluMu protein gp35 from Haemophilus influenzae (strain ATCC 51907 / DSM 11121 / KW20 / Rd).